The following is a 1302-amino-acid chain: DNA-directed RNA polymerase subunit beta (1302 aa).

The protein belongs to the RNA polymerase beta chain family. The RNAP catalytic core consists of 2 alpha, 1 beta, 1 beta' and 1 omega subunit. When a sigma factor is associated with the core the holoenzyme is formed, which can initiate transcription.

It catalyses the reaction RNA(n) + a ribonucleoside 5'-triphosphate = RNA(n+1) + diphosphate. Functionally, DNA-dependent RNA polymerase catalyzes the transcription of DNA into RNA using the four ribonucleoside triphosphates as substrates. The chain is DNA-directed RNA polymerase subunit beta from Spiroplasma citri.